The following is a 317-amino-acid chain: Pseudouridine-5'-phosphate glycosidase 1 (317 aa).

E40 functions as the Proton donor in the catalytic mechanism. Residues K101 and V121 each coordinate substrate. Residue D153 coordinates Mn(2+). 155–157 (SAD) lines the substrate pocket. K174 serves as the catalytic Nucleophile.

The protein belongs to the pseudouridine-5'-phosphate glycosidase family. In terms of assembly, homotrimer. The cofactor is Mn(2+).

It catalyses the reaction D-ribose 5-phosphate + uracil = psi-UMP + H2O. Its function is as follows. Catalyzes the reversible cleavage of pseudouridine 5'-phosphate (PsiMP) to ribose 5-phosphate and uracil. Functions biologically in the cleavage direction, as part of a pseudouridine degradation pathway. The protein is Pseudouridine-5'-phosphate glycosidase 1 of Rhizobium johnstonii (strain DSM 114642 / LMG 32736 / 3841) (Rhizobium leguminosarum bv. viciae).